Reading from the N-terminus, the 236-residue chain is tRNA (guanine-N(7)-)-methyltransferase (236 aa).

Positions 35, 60, 87, and 113 each coordinate S-adenosyl-L-methionine. Aspartate 113 is an active-site residue. Residues lysine 117 and aspartate 149 each coordinate substrate.

The protein belongs to the class I-like SAM-binding methyltransferase superfamily. TrmB family.

The enzyme catalyses guanosine(46) in tRNA + S-adenosyl-L-methionine = N(7)-methylguanosine(46) in tRNA + S-adenosyl-L-homocysteine. The protein operates within tRNA modification; N(7)-methylguanine-tRNA biosynthesis. Catalyzes the formation of N(7)-methylguanine at position 46 (m7G46) in tRNA. This Prochlorococcus marinus (strain MIT 9313) protein is tRNA (guanine-N(7)-)-methyltransferase.